The chain runs to 204 residues: Somatotropin (204 aa).

The signal sequence occupies residues 1 to 17 (MDKVLFLLFVLSLGVSS). Q18 is modified (pyrrolidone carboxylic acid). H36 serves as a coordination point for Zn(2+). C69 and C177 are oxidised to a cystine. Residue E186 participates in Zn(2+) binding. Cysteines 194 and 202 form a disulfide.

Belongs to the somatotropin/prolactin family.

The protein resides in the secreted. Its function is as follows. Growth hormone plays an important role in growth control and is involved in the regulation of several anabolic processes. Implicated as an osmoregulatory substance important for seawater adaptation. This chain is Somatotropin (gh), found in Trichopodus trichopterus (Three spot gourami).